Here is a 367-residue protein sequence, read N- to C-terminus: Heparan sulfate glucosamine 3-O-sulfotransferase 2 (367 aa).

The Cytoplasmic segment spans residues 1-19 (MAYRVLGRAGPPQPRRARR). Residues 20 to 39 (LLFAFTLSLSCTYLCYSFLC) traverse the membrane as a helical; Signal-anchor for type II membrane protein segment. Residues 40 to 367 (CCDDLGRSRL…ETVGQDFRWE (328 aa)) lie on the Lumenal side of the membrane. Positions 61-110 (AGGQKLLQKSRPCDPSGPTPSEPSAPSAPAAAVPAPRLSGSNHSGSPKLG) are disordered. The span at 84 to 96 (SAPSAPAAAVPAP) shows a compositional bias: low complexity. Residue Asn102 is glycosylated (N-linked (GlcNAc...) asparagine). Residue 124 to 128 (KGGTR) participates in 3'-phosphoadenylyl sulfate binding. Substrate contacts are provided by residues 146-152 (EPHFFDR) and 177-180 (KTPS). An N-linked (GlcNAc...) asparagine glycan is attached at Asn193. Residues Arg205 and Ser213 each coordinate 3'-phosphoadenylyl sulfate. N-linked (GlcNAc...) asparagine glycosylation occurs at Asn235. 245 to 246 (WN) lines the substrate pocket. The N-linked (GlcNAc...) asparagine glycan is linked to Asn306. Cys313 and Cys325 form a disulfide bridge. 330 to 334 (KGRTH) is a binding site for 3'-phosphoadenylyl sulfate.

The protein belongs to the sulfotransferase 1 family. In terms of tissue distribution, highly expressed in the brain and weakly expressed in the heart, placenta, lung and skeletal muscle.

Its subcellular location is the golgi apparatus membrane. The enzyme catalyses alpha-D-glucosaminyl-[heparan sulfate](n) + 3'-phosphoadenylyl sulfate = 3-sulfo-alpha-D-glucosaminyl-[heparan sulfate](n) + adenosine 3',5'-bisphosphate + H(+). Its function is as follows. Sulfotransferase that utilizes 3'-phospho-5'-adenylyl sulfate (PAPS) to catalyze the transfer of a sulfo group to an N-unsubstituted glucosamine linked to a 2-O-sulfo iduronic acid unit on heparan sulfate. Catalyzes the O-sulfation of glucosamine in GlcA2S-GlcNS. Unlike HS3ST1/3-OST-1, does not convert non-anticoagulant heparan sulfate to anticoagulant heparan sulfate. The chain is Heparan sulfate glucosamine 3-O-sulfotransferase 2 (HS3ST2) from Homo sapiens (Human).